A 352-amino-acid polypeptide reads, in one-letter code: tRNA pseudouridine synthase D (352 aa).

Asp-81 serves as the catalytic Nucleophile. Residues 157-303 (GIPNYFGAQR…MSHERRILRL (147 aa)) form the TRUD domain.

The protein belongs to the pseudouridine synthase TruD family.

The enzyme catalyses uridine(13) in tRNA = pseudouridine(13) in tRNA. In terms of biological role, responsible for synthesis of pseudouridine from uracil-13 in transfer RNAs. In Pseudomonas fluorescens (strain Pf0-1), this protein is tRNA pseudouridine synthase D.